The following is a 208-amino-acid chain: Large ribosomal subunit protein uL3 (208 aa).

Positions 123 to 146 (RHGQSRGPMAHGSRYHRRPGSMGP) are disordered.

The protein belongs to the universal ribosomal protein uL3 family. In terms of assembly, part of the 50S ribosomal subunit. Forms a cluster with proteins L14 and L19.

Its function is as follows. One of the primary rRNA binding proteins, it binds directly near the 3'-end of the 23S rRNA, where it nucleates assembly of the 50S subunit. This chain is Large ribosomal subunit protein uL3, found in Streptococcus thermophilus (strain CNRZ 1066).